The following is a 275-amino-acid chain: Diaminopimelate epimerase (275 aa).

The substrate site is built by N13, Q46, and N66. Residue C75 is the Proton donor of the active site. Substrate-binding positions include G76–N77, N159, N192, and E210–R211. C219 functions as the Proton acceptor in the catalytic mechanism. G220 to T221 serves as a coordination point for substrate.

Belongs to the diaminopimelate epimerase family. In terms of assembly, homodimer.

It is found in the cytoplasm. It catalyses the reaction (2S,6S)-2,6-diaminopimelate = meso-2,6-diaminopimelate. Its pathway is amino-acid biosynthesis; L-lysine biosynthesis via DAP pathway; DL-2,6-diaminopimelate from LL-2,6-diaminopimelate: step 1/1. Catalyzes the stereoinversion of LL-2,6-diaminopimelate (L,L-DAP) to meso-diaminopimelate (meso-DAP), a precursor of L-lysine and an essential component of the bacterial peptidoglycan. The chain is Diaminopimelate epimerase from Psychromonas ingrahamii (strain DSM 17664 / CCUG 51855 / 37).